The following is a 407-amino-acid chain: Leucine-rich repeat-containing protein 42 (407 aa).

LRR repeat units follow at residues 138-159 (VLKSLCLRNRYLLISERLEEIR), 163-184 (SLECLDLYGCRLGDNHELFKYI), 191-211 (SLVKLFMGANCLSDAGLQRLT), 223-243 (NLQLLDLSENHITEKGLRYLT), and 247-268 (TLQKLDLSGTKVMMDVSLKGFF). The interval 360–389 (VQSSPSGETHSTHKSRKRRLSTEEEQSAAP) is disordered.

Belongs to the LRRC42 family.

The protein is Leucine-rich repeat-containing protein 42 (lrrc42) of Danio rerio (Zebrafish).